A 225-amino-acid chain; its full sequence is Small ribosomal subunit protein uS3 (225 aa).

The KH type-2 domain occupies 38 to 106; it reads IRKFVQNRFN…PVNLNIIEVK (69 aa).

This sequence belongs to the universal ribosomal protein uS3 family. As to quaternary structure, part of the 30S ribosomal subunit. Forms a tight complex with proteins S10 and S14.

Its function is as follows. Binds the lower part of the 30S subunit head. Binds mRNA in the 70S ribosome, positioning it for translation. This chain is Small ribosomal subunit protein uS3, found in Leptospira interrogans serogroup Icterohaemorrhagiae serovar copenhageni (strain Fiocruz L1-130).